The sequence spans 261 residues: Esterase citA (261 aa).

Catalysis depends on charge relay system residues serine 122, aspartate 207, and histidine 235.

This sequence belongs to the LovG family.

The protein operates within mycotoxin biosynthesis. Its function is as follows. Non-reducing polyketide synthase; part of the gene cluster that mediates the biosynthesis of the mycotoxin citrinin, a hepato-nephrotoxic compound to humans due to inhibition of respiration complex III. The pathway begins with the synthesis of a keto-aldehyde intermediate by the citrinin PKS (pksCT also named citS) from successive condensations of 4 malonyl-CoA units, presumably with a simple acetyl-CoA starter unit. Release of the keto-aldehyde intermediate is consistent with the presence of the C-terminal reductive release domain. CitA collaborates with citS by catalyzing the hydrolysis of ACP-bound acyl intermediates to free the ACP from stalled intermediates. CitB then catalyzes the oxidation of the C-12 methyl of the ketone intermediate to an alcohol intermediate which is further oxidized by the oxidoreductase citC to produce a bisaldehyde intermediate. The fourth catalytic step is catalyzed by the citD aldehyde dehydrogenase. The final transformation is the reduction of C-3 by citE to provide the chemically stable citrinin nucleus. CitE appears highly selective for its substrate as its presence in any context other than a full complement of citS and citA-D does not result in observable new compounds. This is Esterase citA from Monascus ruber (Mold).